The primary structure comprises 662 residues: Probable conjugal transfer protein TrbE part 2 (662 aa).

307–314 (GPTGSGKS) contacts ATP.

This sequence belongs to the TrbE/VirB4 family.

The chain is Probable conjugal transfer protein TrbE part 2 (trbEB) from Sinorhizobium fredii (strain NBRC 101917 / NGR234).